Here is a 506-residue protein sequence, read N- to C-terminus: Cysteine--tRNA ligase (506 aa).

Zn(2+) is bound at residue Cys34. Residues 36 to 46 carry the 'HIGH' region motif; sequence PTVYDFAHIGN. The Zn(2+) site is built by Cys230, His269, and Glu273. Residues 302–306 carry the 'KMSKS' region motif; it reads KMSKS. Position 305 (Lys305) interacts with ATP.

This sequence belongs to the class-I aminoacyl-tRNA synthetase family. As to quaternary structure, monomer. Zn(2+) is required as a cofactor.

It localises to the cytoplasm. It catalyses the reaction tRNA(Cys) + L-cysteine + ATP = L-cysteinyl-tRNA(Cys) + AMP + diphosphate. This chain is Cysteine--tRNA ligase, found in Brucella suis (strain ATCC 23445 / NCTC 10510).